The primary structure comprises 503 residues: Maturase K (503 aa).

The protein belongs to the intron maturase 2 family. MatK subfamily.

The protein localises to the plastid. Its subcellular location is the chloroplast. Its function is as follows. Usually encoded in the trnK tRNA gene intron. Probably assists in splicing its own and other chloroplast group II introns. In Thryptomene saxicola (Rock thryptomene), this protein is Maturase K.